The chain runs to 83 residues: Large ribosomal subunit protein eL43 (83 aa).

Residues C38, C41, C56, and C59 each coordinate Zn(2+). Residues 38 to 59 (CPVCGRRAVRRISTGIWQCKKC) form a C4-type zinc finger.

It belongs to the eukaryotic ribosomal protein eL43 family. Putative zinc-binding subfamily. As to quaternary structure, part of the 50S ribosomal subunit. The cofactor is Zn(2+).

Functionally, binds to the 23S rRNA. The sequence is that of Large ribosomal subunit protein eL43 from Pyrococcus abyssi (strain GE5 / Orsay).